The chain runs to 98 residues: NADH-ubiquinone oxidoreductase chain 4L (98 aa).

The next 3 helical transmembrane spans lie at 1–21, 29–49, and 61–81; these read MSLT…GLLM, SLLC…MTIL, and IILL…LVMV.

It belongs to the complex I subunit 4L family. Core subunit of respiratory chain NADH dehydrogenase (Complex I) which is composed of 45 different subunits.

The protein resides in the mitochondrion inner membrane. The enzyme catalyses a ubiquinone + NADH + 5 H(+)(in) = a ubiquinol + NAD(+) + 4 H(+)(out). Core subunit of the mitochondrial membrane respiratory chain NADH dehydrogenase (Complex I) which catalyzes electron transfer from NADH through the respiratory chain, using ubiquinone as an electron acceptor. Part of the enzyme membrane arm which is embedded in the lipid bilayer and involved in proton translocation. The polypeptide is NADH-ubiquinone oxidoreductase chain 4L (MT-ND4L) (Vampyressa brocki (Brock's yellow-eared bat)).